The following is a 179-amino-acid chain: Stathmin-2 (179 aa).

Residues 1–26 (MAKTAMAYKEKMKELSMLSLICSCFY) are membrane attachment. Phosphoserine occurs at positions 16, 50, 62, 73, 80, and 97. The SLD domain maps to 38–179 (DDMEVKQINK…NKELQVELSG (142 aa)). Residues 39–96 (DMEVKQINKRASGQAFELILKPPSPVSEAPRTLASPKKKELSLEEIQKKLEAAEERRK) form a regulatory/phosphorylation domain region. The stretch at 74–179 (PKKKELSLEE…NKELQVELSG (106 aa)) forms a coiled coil.

Belongs to the stathmin family. As to expression, expression is neuron-specific and found in cerebellum, forebrain, midbrain, tectum and spinal cord.

It localises to the cytoplasm. Its subcellular location is the perinuclear region. The protein localises to the cell projection. The protein resides in the growth cone. It is found in the membrane. It localises to the axon. Its subcellular location is the lamellipodium. Functionally, is a key regulator of neurite extension through regulation of microtubule instabilily. This chain is Stathmin-2 (STMN2), found in Gallus gallus (Chicken).